The following is a 164-amino-acid chain: Pheromone-binding protein (164 aa).

Positions 1-22 (MSIQGQIALALMVNMAVGSVDA) are cleaved as a signal peptide. Disulfide bonds link Cys-41-Cys-76, Cys-72-Cys-130, and Cys-119-Cys-139.

This sequence belongs to the PBP/GOBP family. As to quaternary structure, homodimer. Antenna.

In terms of biological role, this major soluble protein in olfactory sensilla of male moths serves to solubilize the extremely hydrophobic pheromone molecules such as bombykol and to transport pheromone through the aqueous lymph to receptors located on olfactory cilia. This chain is Pheromone-binding protein, found in Bombyx mori (Silk moth).